We begin with the raw amino-acid sequence, 507 residues long: GMP synthase [glutamine-hydrolyzing] (507 aa).

Residues 4–193 enclose the Glutamine amidotransferase type-1 domain; the sequence is KIIILDFGSQ…VVDVCGCKQD (190 aa). Cysteine 79 acts as the Nucleophile in catalysis. Residues histidine 167 and glutamate 169 contribute to the active site. The GMPS ATP-PPase domain occupies 194 to 382; the sequence is WSPASFIEST…LGMPEHLITR (189 aa). 221–227 is a binding site for ATP; that stretch reads SGGVDSS.

In terms of assembly, homodimer.

The enzyme catalyses XMP + L-glutamine + ATP + H2O = GMP + L-glutamate + AMP + diphosphate + 2 H(+). It participates in purine metabolism; GMP biosynthesis; GMP from XMP (L-Gln route): step 1/1. Catalyzes the synthesis of GMP from XMP. This is GMP synthase [glutamine-hydrolyzing] from Bacteroides fragilis (strain ATCC 25285 / DSM 2151 / CCUG 4856 / JCM 11019 / LMG 10263 / NCTC 9343 / Onslow / VPI 2553 / EN-2).